Here is a 293-residue protein sequence, read N- to C-terminus: HTH-type transcriptional regulator ArgP (293 aa).

The 57-residue stretch at 4-60 folds into the HTH lysR-type domain; the sequence is PDYRTLQALDAVIRERGFERAAQKLCITQSAVSQRIKQLENLFGQPLLVRTIPPHPT. Positions 21–40 form a DNA-binding region, H-T-H motif; sequence FERAAQKLCITQSAVSQRIK.

This sequence belongs to the LysR transcriptional regulatory family. As to quaternary structure, homodimer.

Its function is as follows. Controls the transcription of genes involved in arginine and lysine metabolism. This Sodalis glossinidius (strain morsitans) protein is HTH-type transcriptional regulator ArgP.